A 464-amino-acid chain; its full sequence is ATP synthase subunit beta (464 aa).

153-160 lines the ATP pocket; that stretch reads GGAGVGKT.

This sequence belongs to the ATPase alpha/beta chains family. As to quaternary structure, F-type ATPases have 2 components, CF(1) - the catalytic core - and CF(0) - the membrane proton channel. CF(1) has five subunits: alpha(3), beta(3), gamma(1), delta(1), epsilon(1). CF(0) has three main subunits: a(1), b(2) and c(9-12). The alpha and beta chains form an alternating ring which encloses part of the gamma chain. CF(1) is attached to CF(0) by a central stalk formed by the gamma and epsilon chains, while a peripheral stalk is formed by the delta and b chains.

The protein localises to the cell membrane. It carries out the reaction ATP + H2O + 4 H(+)(in) = ADP + phosphate + 5 H(+)(out). Its function is as follows. Produces ATP from ADP in the presence of a proton gradient across the membrane. The catalytic sites are hosted primarily by the beta subunits. The chain is ATP synthase subunit beta from Alkaliphilus metalliredigens (strain QYMF).